The primary structure comprises 222 residues: Charged multivesicular body protein 2a (222 aa).

The residue at position 1 (Met-1) is an N-acetylmethionine. Residues 12–53 are a coiled coil; sequence EELLRQNQRALNRAMRELDRERQKLETQEKKIIADIKKMAKQ. Positions 56–222 are interaction with VPS4B; the sequence is MDAVRIMAKD…EERLKNLRRD (167 aa). Phosphoserine is present on Ser-184. Thr-185 is subject to Phosphothreonine. 3 positions are modified to phosphoserine: Ser-188, Ser-190, and Ser-203. The stretch at 195-222 forms a coiled coil; it reads GKKAEAAASALADADADLEERLKNLRRD. The MIT-interacting motif motif lies at 210–220; that stretch reads ADLEERLKNLR. The interval 217-222 is interaction with VTA1; it reads KNLRRD.

This sequence belongs to the SNF7 family. As to quaternary structure, probable core component of the endosomal sorting required for transport complex III (ESCRT-III). ESCRT-III components are thought to multimerize to form a flat lattice on the perimeter membrane of the endosome. Several assembly forms of ESCRT-III may exist that interact and act sequentially. In vitro, heteromerizes with CHMP3 (but not CHMP4) to form helical tubular structures that expose membrane-interacting sites on the outside whereas VPS4B can associate on the inside of the tubule. Interacts with CHMP1B, CHMP2B, CHMP3, CHMP4A, CHMP4B, CHMP4C and CHMP5. Interacts with VPS4A; the interaction is direct. Interacts with VPS4B; the interaction is direct. Interacts with MITD1. Interacts with VTA1; the interaction probably involves the open conformation of CHMP2A. Post-translationally, ISGylated in a CHMP5-dependent manner. Isgylation weakens and inhibits its interactions with VPS4A and VTA1 respectively.

The protein resides in the late endosome membrane. Its subcellular location is the nucleus envelope. In terms of biological role, probable core component of the endosomal sorting required for transport complex III (ESCRT-III) which is involved in multivesicular bodies (MVBs) formation and sorting of endosomal cargo proteins into MVBs. MVBs contain intraluminal vesicles (ILVs) that are generated by invagination and scission from the limiting membrane of the endosome and mostly are delivered to lysosomes enabling degradation of membrane proteins, such as stimulated growth factor receptors, lysosomal enzymes and lipids. The MVB pathway appears to require the sequential function of ESCRT-O, -I,-II and -III complexes. ESCRT-III proteins mostly dissociate from the invaginating membrane before the ILV is released. The ESCRT machinery also functions in topologically equivalent membrane fission events, such as the terminal stages of cytokinesis. Together with SPAST, the ESCRT-III complex promotes nuclear envelope sealing and mitotic spindle disassembly during late anaphase. Recruited to the reforming nuclear envelope (NE) during anaphase by LEMD2. ESCRT-III proteins are believed to mediate the necessary vesicle extrusion and/or membrane fission activities, possibly in conjunction with the AAA ATPase VPS4. Functionally, (Microbial infection) The ESCRT machinery functions in topologically equivalent membrane fission events, such as the budding of enveloped viruses (HIV-1 and other lentiviruses). Involved in HIV-1 p6- and p9-dependent virus release. In Homo sapiens (Human), this protein is Charged multivesicular body protein 2a (CHMP2A).